The following is a 573-amino-acid chain: Developmental and secondary metabolism regulator VEL1 (573 aa).

A Velvet domain is found at 26 to 220 (NRHLWYQLTV…ADQGCRVRIR (195 aa)). The Nuclear localization signal motif lies at 40 to 45 (ERARAC). A disordered region spans residues 222-520 (DVRMRKRDGK…STGGKRKHDH (299 aa)). Residues 230-245 (GKGSGFDRRGEEEYSR) show a composition bias toward basic and acidic residues. Composition is skewed to pro residues over residues 291–310 (APPPLPPPPPSSYDAPPPAA) and 341–351 (APIPPATPTGP). Residues 352-363 (YPTSSAAPSPYA) are compositionally biased toward low complexity. Pro residues predominate over residues 379–389 (PPAPSASPAPP). Residues 432–448 (TPASQPTYSTPASQPTY) are compositionally biased toward polar residues. The segment covering 458 to 475 (SAPPPAPYSAPAPPPPRP) has biased composition (pro residues). Positions 476 to 504 (SMSQSSLAPLKIASLVSPLPPIEAQTEPL) are PEST.

Belongs to the velvet family. VeA subfamily. Component of the heterotrimeric velvet complex composed of LAE1, VEL1 and VEL2; VEL1 acting as a bridging protein between LAE1 and VEL2. Interacts with LAE1.

The protein localises to the nucleus. It is found in the cytoplasm. In terms of biological role, component of the velvet transcription factor complex that controls sexual/asexual developmental ratio in response to light, promoting sexual development in the darkness while stimulating asexual sporulation under illumination. The velvet complex hat acts as a global regulator for secondary metabolite gene expression. Regulates expression of the carbohydrate-active enzyme gene clusters. This is Developmental and secondary metabolism regulator VEL1 from Hypocrea jecorina (strain QM6a) (Trichoderma reesei).